An 893-amino-acid chain; its full sequence is Dolichyl-phosphate-mannose--protein mannosyltransferase 1 (893 aa).

7 helical membrane passes run 29 to 49 (FSFLDYVVVIFLTVVAFCVRA), 77 to 97 (LLMDVYPPLGKLLFSLVAALT), 124 to 144 (LFTCLLGSLLVPLMYGTVYFP), 147 to 167 (SKTAASLAALFVIFDNGLITM), 170 to 190 (YIMIEIPALYFMSLTAFYWSV), 224 to 244 (AMFTFGWLLILAAFHLWNLLG), and 258 to 278 (FSYIFYLIGVPITVYLAVFAV). In terms of domain architecture, MIR 1 spans 310 to 364 (FADVAYGSLVTIRNAIPEHGYLHSSELLYPEGTEQQIISLVDEPNQNALWIIEHE). The N-linked (GlcNAc...) asparagine glycan is linked to N370. 2 consecutive MIR domains span residues 374–433 (IELL…IQIL) and 443–499 (NGTV…IESN). An N-linked (GlcNAc...) asparagine glycan is attached at N443. T451 bears the Phosphothreonine mark. Helical transmembrane passes span 573-593 (FVWYSVISLVAFFVIVQIFCL), 610-630 (YNYNIGKFVVAWLLHWAPYIL), and 643-663 (ALYFGIAALGVSWSFLGNAVF). N-linked (GlcNAc...) asparagine glycosylation occurs at N665. Residues 671–691 (ALSVIIMALMFLVYRLYSPFT) traverse the membrane as a helical segment. N-linked (GlcNAc...) asparagine glycosylation is present at N720. The segment at 785–893 (KAEQEAREAA…VAESAQARVE (109 aa)) is disordered. Residues 786 to 806 (AEQEAREAAEKAASEAAERSS) show a composition bias toward basic and acidic residues. Low complexity-rich tracts occupy residues 807–823 (SEAAASSSSESVAAASV) and 854–864 (MEAAALNNAAE). Residues 868 to 878 (VVGSSPESVAS) are compositionally biased toward polar residues.

The protein belongs to the glycosyltransferase 39 family.

The protein resides in the endoplasmic reticulum membrane. Its subcellular location is the nucleus membrane. The catalysed reaction is a di-trans,poly-cis-dolichyl beta-D-mannosyl phosphate + L-seryl-[protein] = 3-O-(alpha-D-mannosyl)-L-seryl-[protein] + a di-trans,poly-cis-dolichyl phosphate + H(+). The enzyme catalyses a di-trans,poly-cis-dolichyl beta-D-mannosyl phosphate + L-threonyl-[protein] = 3-O-(alpha-D-mannosyl)-L-threonyl-[protein] + a di-trans,poly-cis-dolichyl phosphate + H(+). The protein operates within protein modification; protein glycosylation. Its function is as follows. Transfers mannose from Dol-P-mannose to Ser or Thr residues on proteins. Required for normal cell growth and septum formation. Shown to actively O-mannosylate wsc1. The sequence is that of Dolichyl-phosphate-mannose--protein mannosyltransferase 1 (ogm1) from Schizosaccharomyces pombe (strain 972 / ATCC 24843) (Fission yeast).